The chain runs to 278 residues: 4-hydroxy-tetrahydrodipicolinate reductase (278 aa).

NAD(+) contacts are provided by residues Gly-13 to Met-18 and Gly-111 to Thr-113. The active-site Proton donor/acceptor is the His-167. His-168 is a (S)-2,3,4,5-tetrahydrodipicolinate binding site. The Proton donor role is filled by Lys-171. Gly-177–Thr-178 is a (S)-2,3,4,5-tetrahydrodipicolinate binding site.

The protein belongs to the DapB family.

It is found in the cytoplasm. The catalysed reaction is (S)-2,3,4,5-tetrahydrodipicolinate + NAD(+) + H2O = (2S,4S)-4-hydroxy-2,3,4,5-tetrahydrodipicolinate + NADH + H(+). It carries out the reaction (S)-2,3,4,5-tetrahydrodipicolinate + NADP(+) + H2O = (2S,4S)-4-hydroxy-2,3,4,5-tetrahydrodipicolinate + NADPH + H(+). Its pathway is amino-acid biosynthesis; L-lysine biosynthesis via DAP pathway; (S)-tetrahydrodipicolinate from L-aspartate: step 4/4. Functionally, catalyzes the conversion of 4-hydroxy-tetrahydrodipicolinate (HTPA) to tetrahydrodipicolinate. The sequence is that of 4-hydroxy-tetrahydrodipicolinate reductase from Trichormus variabilis (strain ATCC 29413 / PCC 7937) (Anabaena variabilis).